Here is a 208-residue protein sequence, read N- to C-terminus: Interleukin-6 (208 aa).

A signal peptide spans 1–29; sequence MNSRFTSAFTPFAVSLGLLLVMTSAFPTP. A glycan (N-linked (GlcNAc...) asparagine) is linked at Asn38. Cysteines 72 and 78 form a disulfide. Position 81 is a phosphoserine (Ser81). Cys101 and Cys111 are disulfide-bonded.

This sequence belongs to the IL-6 superfamily. In terms of assembly, component of a hexamer of two molecules each of IL6, IL6R and IL6ST; first binds to IL6R to associate with the signaling subunit IL6ST. Interacts with IL6R (via the N-terminal ectodomain); this interaction may be affected by IL6R-binding with SORL1, hence decreasing IL6 cis signaling. Interacts with SORL1 (via the N-terminal ectodomain); this interaction leads to IL6 internalization and lysosomal degradation. May form a trimeric complex with the soluble SORL1 ectodomain and soluble IL6R receptor; this interaction might stabilize circulating IL6, hence promoting IL6 trans signaling.

The protein resides in the secreted. Cytokine with a wide variety of biological functions in immunity, tissue regeneration, and metabolism. Binds to IL6R, then the complex associates to the signaling subunit IL6ST/gp130 to trigger the intracellular IL6-signaling pathway. The interaction with the membrane-bound IL6R and IL6ST stimulates 'classic signaling', whereas the binding of IL6 and soluble IL6R to IL6ST stimulates 'trans-signaling'. Alternatively, 'cluster signaling' occurs when membrane-bound IL6:IL6R complexes on transmitter cells activate IL6ST receptors on neighboring receiver cells. In terms of biological role, IL6 is a potent inducer of the acute phase response. Rapid production of IL6 contributes to host defense during infection and tissue injury, but excessive IL6 synthesis is involved in disease pathology. In the innate immune response, is synthesized by myeloid cells, such as macrophages and dendritic cells, upon recognition of pathogens through toll-like receptors (TLRs) at the site of infection or tissue injury. In the adaptive immune response, is required for the differentiation of B cells into immunoglobulin-secreting cells. Plays a major role in the differentiation of CD4(+) T cell subsets. Essential factor for the development of T follicular helper (Tfh) cells that are required for the induction of germinal-center formation. Required to drive naive CD4(+) T cells to the Th17 lineage. Also required for proliferation of myeloma cells and the survival of plasmablast cells. Its function is as follows. Acts as an essential factor in bone homeostasis and on vessels directly or indirectly by induction of VEGF, resulting in increased angiogenesis activity and vascular permeability. Induces, through 'trans-signaling' and synergistically with IL1B and TNF, the production of VEGF. Involved in metabolic controls, is discharged into the bloodstream after muscle contraction increasing lipolysis and improving insulin resistance. 'Trans-signaling' in central nervous system also regulates energy and glucose homeostasis. Mediates, through GLP-1, crosstalk between insulin-sensitive tissues, intestinal L cells and pancreatic islets to adapt to changes in insulin demand. Also acts as a myokine. Plays a protective role during liver injury, being required for maintenance of tissue regeneration. Also has a pivotal role in iron metabolism by regulating HAMP/hepcidin expression upon inflammation or bacterial infection. Through activation of IL6ST-YAP-NOTCH pathway, induces inflammation-induced epithelial regeneration. The protein is Interleukin-6 (IL6) of Bubalus bubalis (Domestic water buffalo).